A 191-amino-acid polypeptide reads, in one-letter code: Ribosome maturation factor RimM (191 aa).

Residues 102 to 185 (EEEYHVSQLI…RIEINPPKGL (84 aa)) form the PRC barrel domain.

Belongs to the RimM family. In terms of assembly, binds ribosomal protein uS19.

It localises to the cytoplasm. In terms of biological role, an accessory protein needed during the final step in the assembly of 30S ribosomal subunit, possibly for assembly of the head region. Essential for efficient processing of 16S rRNA. May be needed both before and after RbfA during the maturation of 16S rRNA. It has affinity for free ribosomal 30S subunits but not for 70S ribosomes. This Crocosphaera subtropica (strain ATCC 51142 / BH68) (Cyanothece sp. (strain ATCC 51142)) protein is Ribosome maturation factor RimM.